The chain runs to 412 residues: uncharacterized protein (412 aa).

The TRAM domain occupies 6 to 64 (ELAKGDIISVEVLRPAHGGEGIGHHDGRVIFVKGGIPGDVVDVEIAQLKKKWARGEVVK). Residues Gln242, Tyr278, Glu300, and Asp341 each coordinate S-adenosyl-L-methionine. Catalysis depends on Cys368, which acts as the Nucleophile.

This sequence belongs to the class I-like SAM-binding methyltransferase superfamily. RNA M5U methyltransferase family.

This is an uncharacterized protein from Corynebacterium glutamicum (strain ATCC 13032 / DSM 20300 / JCM 1318 / BCRC 11384 / CCUG 27702 / LMG 3730 / NBRC 12168 / NCIMB 10025 / NRRL B-2784 / 534).